A 142-amino-acid chain; its full sequence is Hemoglobin subunit alpha (142 aa).

Positions 2–142 constitute a Globin domain; the sequence is VLSPADKSNV…VSTVLTSKYR (141 aa). A Phosphoserine modification is found at S4. N6-succinyllysine occurs at positions 8 and 12. Residue K17 is modified to N6-acetyllysine; alternate. The residue at position 17 (K17) is an N6-succinyllysine; alternate. Position 25 is a phosphotyrosine (Y25). The residue at position 36 (S36) is a Phosphoserine. K41 bears the N6-succinyllysine mark. Phosphoserine is present on S50. H59 is a binding site for O2. Residue H88 coordinates heme b. The residue at position 103 (S103) is a Phosphoserine. Position 109 is a phosphothreonine (T109). Phosphoserine occurs at positions 125 and 132. A phosphothreonine mark is found at T135 and T138. Position 139 is a phosphoserine (S139).

The protein belongs to the globin family. As to quaternary structure, heterotetramer of two alpha chains and two beta chains. In terms of tissue distribution, red blood cells.

Its function is as follows. Involved in oxygen transport from the lung to the various peripheral tissues. Functionally, hemopressin acts as an antagonist peptide of the cannabinoid receptor CNR1. Hemopressin-binding efficiently blocks cannabinoid receptor CNR1 and subsequent signaling. In Macaca fuscata fuscata (Japanese macaque), this protein is Hemoglobin subunit alpha (HBA).